A 256-amino-acid chain; its full sequence is MSYLSRILEEKEREVGELASEHPARRYAELQGSLAPTRDFTGALRRTGRGLRLIAEIKKASPSRGLIVPDFDPVNIARRYGELGAAAYSVLTDRTFFQGSIDYLQMVSRSFQLPVLRKDFIIDESQIFQSRLTGADAILLIVAALDSCQLGDYLQLAASVGLHVLVEVHDRKELDRAIEKGAPIIGVNNRDLKDFSLKLETSLSLRPFIPSDVLAVSESGLKSSADIALIEQASFDAVLIGEGLYTSPELGRITWS.

Belongs to the TrpC family.

It catalyses the reaction 1-(2-carboxyphenylamino)-1-deoxy-D-ribulose 5-phosphate + H(+) = (1S,2R)-1-C-(indol-3-yl)glycerol 3-phosphate + CO2 + H2O. It participates in amino-acid biosynthesis; L-tryptophan biosynthesis; L-tryptophan from chorismate: step 4/5. The sequence is that of Indole-3-glycerol phosphate synthase from Pelodictyon phaeoclathratiforme (strain DSM 5477 / BU-1).